The sequence spans 557 residues: Dihydroxy-acid dehydratase (557 aa).

Aspartate 78 contributes to the Mg(2+) binding site. Cysteine 119 contributes to the [2Fe-2S] cluster binding site. Mg(2+)-binding residues include aspartate 120 and lysine 121. Lysine 121 bears the N6-carboxylysine mark. Position 191 (cysteine 191) interacts with [2Fe-2S] cluster. Glutamate 442 lines the Mg(2+) pocket. Serine 468 functions as the Proton acceptor in the catalytic mechanism.

This sequence belongs to the IlvD/Edd family. Homodimer. [2Fe-2S] cluster serves as cofactor. The cofactor is Mg(2+).

The enzyme catalyses (2R)-2,3-dihydroxy-3-methylbutanoate = 3-methyl-2-oxobutanoate + H2O. It catalyses the reaction (2R,3R)-2,3-dihydroxy-3-methylpentanoate = (S)-3-methyl-2-oxopentanoate + H2O. Its pathway is amino-acid biosynthesis; L-isoleucine biosynthesis; L-isoleucine from 2-oxobutanoate: step 3/4. It functions in the pathway amino-acid biosynthesis; L-valine biosynthesis; L-valine from pyruvate: step 3/4. In terms of biological role, functions in the biosynthesis of branched-chain amino acids. Catalyzes the dehydration of (2R,3R)-2,3-dihydroxy-3-methylpentanoate (2,3-dihydroxy-3-methylvalerate) into 2-oxo-3-methylpentanoate (2-oxo-3-methylvalerate) and of (2R)-2,3-dihydroxy-3-methylbutanoate (2,3-dihydroxyisovalerate) into 2-oxo-3-methylbutanoate (2-oxoisovalerate), the penultimate precursor to L-isoleucine and L-valine, respectively. This chain is Dihydroxy-acid dehydratase, found in Syntrophobacter fumaroxidans (strain DSM 10017 / MPOB).